The following is a 193-amino-acid chain: Protein D5 (193 aa).

In terms of biological role, repression of replication initiation (possible). In Dictyostelium discoideum (Social amoeba), this protein is Protein D5 (ddpE).